Here is a 377-residue protein sequence, read N- to C-terminus: Nitric oxide reductase FlRd-NAD(+) reductase (377 aa).

It belongs to the FAD-dependent oxidoreductase family. FAD is required as a cofactor.

It is found in the cytoplasm. The enzyme catalyses 2 reduced [nitric oxide reductase rubredoxin domain] + NAD(+) + H(+) = 2 oxidized [nitric oxide reductase rubredoxin domain] + NADH. Its pathway is nitrogen metabolism; nitric oxide reduction. In terms of biological role, one of at least two accessory proteins for anaerobic nitric oxide (NO) reductase. Reduces the rubredoxin moiety of NO reductase. In Salmonella paratyphi C (strain RKS4594), this protein is Nitric oxide reductase FlRd-NAD(+) reductase.